The primary structure comprises 328 residues: Gonadotropin-releasing hormone receptor (328 aa).

Residues 1-38 lie on the Extracellular side of the membrane; that stretch reads MANGDSPDQNENHCSAINSSILLTPGSLPTLTLSGKIR. Asn-18 carries an N-linked (GlcNAc...) asparagine glycan. The helical transmembrane segment at 39-58 threads the bilayer; it reads VTVTFFLFLLSTIFNTSFLL. Over 59–77 the chain is Cytoplasmic; it reads KLQNWTQRKEKRKKLSKMK. The chain crosses the membrane as a helical span at residues 78–97; it reads VLLKHLTLANLLETLIVMPL. The Extracellular portion of the chain corresponds to 98–115; it reads DGMWNITVQWYAGELLCK. N-linked (GlcNAc...) asparagine glycosylation is present at Asn-102. Cys-114 and Cys-196 are oxidised to a cystine. Residues 116–137 form a helical membrane-spanning segment; the sequence is VLSYLKLFSMYAPAFMMVVISL. Residues 138–164 are Cytoplasmic-facing; that stretch reads DRSLAITRPLAVKSNSKLGQFMIGLAW. The helical transmembrane segment at 165–184 threads the bilayer; the sequence is LLSSIFAGPQLYIFGMIHLA. At 185 to 212 the chain is on the extracellular side; that stretch reads DDSGQTEGFSQCVTHCSFPQWWHQAFYN. A helical transmembrane segment spans residues 213–232; sequence FFTFSCLFIIPLLIMLICNA. The Cytoplasmic portion of the chain corresponds to 233–281; that stretch reads KIIFTLTRVLHQDPHKLQLNQSKNNIPQARLRTLKMTVAFATSFTVCWT. The chain crosses the membrane as a helical span at residues 282-300; sequence PYYVLGIWYWFDPDMVNRV. Residues 301-306 are Extracellular-facing; it reads SDPVNH. A helical transmembrane segment spans residues 307 to 326; the sequence is FFFLFAFLNPCFDPLIYGYF. Topologically, residues 327–328 are cytoplasmic; the sequence is SL.

It belongs to the G-protein coupled receptor 1 family.

The protein localises to the cell membrane. Receptor for gonadotropin releasing hormone (GnRH) that mediates the action of GnRH to stimulate the secretion of the gonadotropic hormones luteinizing hormone (LH) and follicle-stimulating hormone (FSH). This receptor mediates its action by association with G-proteins that activate a phosphatidylinositol-calcium second messenger system. This chain is Gonadotropin-releasing hormone receptor (GNRHR), found in Ovis aries (Sheep).